The primary structure comprises 280 residues: P32 adhesin (280 aa).

2 helical membrane-spanning segments follow: residues 13-37 (FIVLALLFTTILIVSLSLLAFALVV) and 68-92 (WFIPTVAGSFGFSALAIILGLAIGL). Residues 114–128 (EQLQRISDQQEQQTV) show a composition bias toward polar residues. Disordered regions lie at residues 114–149 (EQLQRISDQQEQQTVEIDPQQSQAQPSQPQVQQPLQ) and 163–280 (FNPN…GLKP). 2 stretches are compositionally biased toward low complexity: residues 132-149 (PQQSQAQPSQPQVQQPLQ) and 168-188 (QQRPGFNQPNQQFQPHNNFNP). 13 tandem repeats follow at residues 163 to 168 (FNPNMQ), 170 to 174 (RPGFN), 186 to 190 (FNPRM), 191 to 195 (NPNMQ), 196 to 200 (RPGFN), 199 to 204 (FNPNMQ), 206 to 210 (RPGFN), 222 to 226 (FNPRM), 227 to 231 (NPNMQ), 232 to 236 (RPGFN), 249 to 254 (FNPNMQ), 256 to 260 (RPGFN), and 259 to 264 (FNPNMQ). The segment at 163-264 (FNPNMQQRPG…QRPGFNPNMQ (102 aa)) is 6 X 5 AA repeats of [FM]-N-P-N-M-Q. The 5 X 5 AA repeats of R-P-G-F-N stretch occupies residues 170–260 (RPGFNQPNQQ…PNMQQRPGFN (91 aa)). The tract at residues 186 to 226 (FNPRMNPNMQRPGFNPNMQQRPGFNQPNQQFQPHNNFNPRM) is 2 X 5 AA repeats of F-N-P-R-M. Residues 204–224 (QQRPGFNQPNQQFQPHNNFNP) show a composition bias toward low complexity. A compositionally biased stretch (low complexity) spans 235–257 (FNQPHPNQFAQPNNFNPNMQQRP). Residues 261 to 271 (PNMQQRPNPSQ) are compositionally biased toward polar residues.

The protein resides in the cell projection. It is found in the attachment organelle membrane. Its function is as follows. Adhesin necessary for successful cytadherence and virulence. The protein is P32 adhesin of Mycoplasma genitalium (strain ATCC 33530 / DSM 19775 / NCTC 10195 / G37) (Mycoplasmoides genitalium).